Reading from the N-terminus, the 476-residue chain is Aspartyl/glutamyl-tRNA(Asn/Gln) amidotransferase subunit B (476 aa).

The protein belongs to the GatB/GatE family. GatB subfamily. In terms of assembly, heterotrimer of A, B and C subunits.

The catalysed reaction is L-glutamyl-tRNA(Gln) + L-glutamine + ATP + H2O = L-glutaminyl-tRNA(Gln) + L-glutamate + ADP + phosphate + H(+). It carries out the reaction L-aspartyl-tRNA(Asn) + L-glutamine + ATP + H2O = L-asparaginyl-tRNA(Asn) + L-glutamate + ADP + phosphate + 2 H(+). Its function is as follows. Allows the formation of correctly charged Asn-tRNA(Asn) or Gln-tRNA(Gln) through the transamidation of misacylated Asp-tRNA(Asn) or Glu-tRNA(Gln) in organisms which lack either or both of asparaginyl-tRNA or glutaminyl-tRNA synthetases. The reaction takes place in the presence of glutamine and ATP through an activated phospho-Asp-tRNA(Asn) or phospho-Glu-tRNA(Gln). This Listeria innocua serovar 6a (strain ATCC BAA-680 / CLIP 11262) protein is Aspartyl/glutamyl-tRNA(Asn/Gln) amidotransferase subunit B.